Reading from the N-terminus, the 222-residue chain is MLPHGLIVSCQALADEPLHSSFIMSKMALAAYEGGAVGIRANTKEDILAIKETVDLPVIGIVKRDYDHSDVFITATSKEVDELIESQCEVIALDATLQQRPKETLDELVSYIRTHAPNVEIMADIATVEEAKNAARLGFDYIGTTLHGYTSYTQGQLLYQNDFQFLKDVLQSVDAKVIAEGNVITPDMYKRVMDLGVHCSVVGGAITRPKEITKRFVQVMED.

Belongs to the NanE family.

It catalyses the reaction an N-acyl-D-glucosamine 6-phosphate = an N-acyl-D-mannosamine 6-phosphate. Its pathway is amino-sugar metabolism; N-acetylneuraminate degradation; D-fructose 6-phosphate from N-acetylneuraminate: step 3/5. Converts N-acetylmannosamine-6-phosphate (ManNAc-6-P) to N-acetylglucosamine-6-phosphate (GlcNAc-6-P). This chain is Putative N-acetylmannosamine-6-phosphate 2-epimerase, found in Staphylococcus aureus (strain Mu3 / ATCC 700698).